The primary structure comprises 123 residues: Histone H2B.3 (123 aa).

The tract at residues 1–30 is disordered; the sequence is MPPKVSGKAAKKAGKAQKNISKGDKKKNRK. Ser110 is a glycosylation site (O-linked (GlcNAc) serine). Lys118 participates in a covalent cross-link: Glycyl lysine isopeptide (Lys-Gly) (interchain with G-Cter in ubiquitin).

This sequence belongs to the histone H2B family. The nucleosome is a histone octamer containing two molecules each of H2A, H2B, H3 and H4 assembled in one H3-H4 heterotetramer and two H2A-H2B heterodimers. The octamer wraps approximately 147 bp of DNA. In terms of processing, monoubiquitination of Lys-118 gives a specific tag for epigenetic transcriptional activation and is also prerequisite for histone H3 'Lys-4' and 'Lys-79' methylation. Post-translationally, glcNAcylation at Ser-110 promotes monoubiquitination of Lys-118. It fluctuates in response to extracellular glucose, and associates with transcribed genes.

The protein localises to the nucleus. It localises to the chromosome. Functionally, core component of nucleosome. Nucleosomes wrap and compact DNA into chromatin, limiting DNA accessibility to the cellular machineries which require DNA as a template. Histones thereby play a central role in transcription regulation, DNA repair, DNA replication and chromosomal stability. DNA accessibility is regulated via a complex set of post-translational modifications of histones, also called histone code, and nucleosome remodeling. This Tigriopus californicus (Marine copepod) protein is Histone H2B.3.